The primary structure comprises 378 residues: Probable pectin lyase C (378 aa).

The signal sequence occupies residues 1–18 (MKVPFLQLLCLNAALASA). 2 disulfide bridges follow: Cys-81/Cys-100 and Cys-90/Cys-220. A glycan (N-linked (GlcNAc...) asparagine) is linked at Asn-123. Arg-250 is a catalytic residue. A disulfide bridge connects residues Cys-316 and Cys-324.

This sequence belongs to the polysaccharide lyase 1 family.

It is found in the secreted. It carries out the reaction Eliminative cleavage of (1-&gt;4)-alpha-D-galacturonan methyl ester to give oligosaccharides with 4-deoxy-6-O-methyl-alpha-D-galact-4-enuronosyl groups at their non-reducing ends.. Pectinolytic enzymes consist of four classes of enzymes: pectin lyase, polygalacturonase, pectin methylesterase and rhamnogalacturonase. Among pectinolytic enzymes, pectin lyase is the most important in depolymerization of pectin, since it cleaves internal glycosidic bonds of highly methylated pectins. This Aspergillus niger protein is Probable pectin lyase C (pelC).